Consider the following 285-residue polypeptide: 2-dehydro-3-deoxyphosphooctonate aldolase (285 aa).

It belongs to the KdsA family.

It localises to the cytoplasm. The enzyme catalyses D-arabinose 5-phosphate + phosphoenolpyruvate + H2O = 3-deoxy-alpha-D-manno-2-octulosonate-8-phosphate + phosphate. Its pathway is carbohydrate biosynthesis; 3-deoxy-D-manno-octulosonate biosynthesis; 3-deoxy-D-manno-octulosonate from D-ribulose 5-phosphate: step 2/3. It functions in the pathway bacterial outer membrane biogenesis; lipopolysaccharide biosynthesis. This Acidovorax sp. (strain JS42) protein is 2-dehydro-3-deoxyphosphooctonate aldolase.